Here is a 179-residue protein sequence, read N- to C-terminus: NEDD8-conjugating enzyme UBC12 (179 aa).

A UBC core domain is found at alanine 24–valine 168. Cysteine 106 acts as the Glycyl thioester intermediate in catalysis.

It belongs to the ubiquitin-conjugating enzyme family. UBC12 subfamily.

The catalysed reaction is [E1 NEDD8-activating enzyme]-S-[NEDD8 protein]-yl-L-cysteine + [E2 NEDD8-conjugating enzyme]-L-cysteine = [E1 NEDD8-activating enzyme]-L-cysteine + [E2 NEDD8-conjugating enzyme]-S-[NEDD8-protein]-yl-L-cysteine.. The protein operates within protein modification; protein neddylation. Accepts the ubiquitin-like protein NEDD8/RUB1 from the UBA3-ULA1 E1 complex and catalyzes its covalent attachment to other proteins. This is NEDD8-conjugating enzyme UBC12 (UBC12) from Yarrowia lipolytica (strain CLIB 122 / E 150) (Yeast).